A 136-amino-acid chain; its full sequence is 5-hydroxyisourate hydrolase (136 aa).

The signal sequence occupies residues Met1–Ala20. 3 residues coordinate substrate: His31, Arg69, and Tyr133.

It belongs to the transthyretin family. 5-hydroxyisourate hydrolase subfamily. As to quaternary structure, homotetramer.

It is found in the periplasm. The enzyme catalyses 5-hydroxyisourate + H2O = 5-hydroxy-2-oxo-4-ureido-2,5-dihydro-1H-imidazole-5-carboxylate + H(+). Catalyzes the hydrolysis of 5-hydroxyisourate (HIU) to 2-oxo-4-hydroxy-4-carboxy-5-ureidoimidazoline (OHCU). The sequence is that of 5-hydroxyisourate hydrolase (hiuH) from Salmonella typhi.